A 98-amino-acid chain; its full sequence is MKVTDVRIRKVAAEGKMKAIVSVTFDEEFVVHDIKIIEGQNGLFIAMPSRKMGEGDFRDIAHPINSDTRSKIQDAIFAEYAIMNEEVQVQVQVTEEAL.

This sequence belongs to the SpoVG family.

In terms of biological role, could be involved in septation. The polypeptide is Putative septation protein SpoVG (Alkaliphilus metalliredigens (strain QYMF)).